A 291-amino-acid chain; its full sequence is Ribosomal large subunit pseudouridine synthase B (291 aa).

Residues Glu3–Ala63 form the S4 RNA-binding domain. Residue Asp110 is the Nucleophile of the active site. The disordered stretch occupies residues Val272 to Gly291.

It belongs to the pseudouridine synthase RsuA family.

The enzyme catalyses uridine(2605) in 23S rRNA = pseudouridine(2605) in 23S rRNA. Functionally, responsible for synthesis of pseudouridine from uracil-2605 in 23S ribosomal RNA. This chain is Ribosomal large subunit pseudouridine synthase B (rluB), found in Salmonella typhi.